A 121-amino-acid polypeptide reads, in one-letter code: Large ribosomal subunit protein uL14 (121 aa).

It belongs to the universal ribosomal protein uL14 family. Part of the 50S ribosomal subunit. Forms a cluster with proteins L3 and L19. In the 70S ribosome, L14 and L19 interact and together make contacts with the 16S rRNA in bridges B5 and B8.

Functionally, binds to 23S rRNA. Forms part of two intersubunit bridges in the 70S ribosome. The sequence is that of Large ribosomal subunit protein uL14 from Synechococcus sp. (strain CC9605).